Reading from the N-terminus, the 250-residue chain is Cell division protein ZapD (250 aa).

This sequence belongs to the ZapD family. In terms of assembly, interacts with FtsZ.

It is found in the cytoplasm. Cell division factor that enhances FtsZ-ring assembly. Directly interacts with FtsZ and promotes bundling of FtsZ protofilaments, with a reduction in FtsZ GTPase activity. In Bordetella petrii (strain ATCC BAA-461 / DSM 12804 / CCUG 43448), this protein is Cell division protein ZapD.